The primary structure comprises 252 residues: NAD(P)H-quinone oxidoreductase subunit K (252 aa).

Cysteine 73, cysteine 74, cysteine 138, and cysteine 169 together coordinate [4Fe-4S] cluster. The span at 225–236 (ASTQKQALSPSQ) shows a compositional bias: polar residues. The disordered stretch occupies residues 225–252 (ASTQKQALSPSQEIPLEDQNEATKEIAQ).

It belongs to the complex I 20 kDa subunit family. NDH-1 can be composed of about 15 different subunits; different subcomplexes with different compositions have been identified which probably have different functions. [4Fe-4S] cluster serves as cofactor.

Its subcellular location is the cellular thylakoid membrane. The catalysed reaction is a plastoquinone + NADH + (n+1) H(+)(in) = a plastoquinol + NAD(+) + n H(+)(out). The enzyme catalyses a plastoquinone + NADPH + (n+1) H(+)(in) = a plastoquinol + NADP(+) + n H(+)(out). Its function is as follows. NDH-1 shuttles electrons from an unknown electron donor, via FMN and iron-sulfur (Fe-S) centers, to quinones in the respiratory and/or the photosynthetic chain. The immediate electron acceptor for the enzyme in this species is believed to be plastoquinone. Couples the redox reaction to proton translocation, and thus conserves the redox energy in a proton gradient. Cyanobacterial NDH-1 also plays a role in inorganic carbon-concentration. This chain is NAD(P)H-quinone oxidoreductase subunit K, found in Prochlorococcus marinus (strain MIT 9211).